A 507-amino-acid chain; its full sequence is AMP phosphorylase (507 aa).

AMP-binding positions include glycine 168, 194–199 (SRAITG), and threonine 203. Aspartate 256 (proton donor) is an active-site residue. AMP is bound by residues serine 264 and lysine 288.

Belongs to the thymidine/pyrimidine-nucleoside phosphorylase family. Type 2 subfamily.

The catalysed reaction is AMP + phosphate = alpha-D-ribose 1,5-bisphosphate + adenine. It catalyses the reaction CMP + phosphate = cytosine + alpha-D-ribose 1,5-bisphosphate. The enzyme catalyses UMP + phosphate = alpha-D-ribose 1,5-bisphosphate + uracil. Its function is as follows. Catalyzes the conversion of AMP and phosphate to adenine and ribose 1,5-bisphosphate (R15P). Exhibits phosphorylase activity toward CMP and UMP in addition to AMP. Functions in an archaeal AMP degradation pathway, together with R15P isomerase and RubisCO. In Methanosarcina mazei (strain ATCC BAA-159 / DSM 3647 / Goe1 / Go1 / JCM 11833 / OCM 88) (Methanosarcina frisia), this protein is AMP phosphorylase.